Reading from the N-terminus, the 350-residue chain is Homoserine O-succinyltransferase (350 aa).

The active-site Acyl-thioester intermediate is cysteine 146. Substrate-binding residues include lysine 167 and serine 196. Residue histidine 239 is the Proton acceptor of the active site. The active site involves glutamate 241. Residue arginine 253 coordinates substrate.

Belongs to the MetA family.

It is found in the cytoplasm. The catalysed reaction is L-homoserine + succinyl-CoA = O-succinyl-L-homoserine + CoA. It participates in amino-acid biosynthesis; L-methionine biosynthesis via de novo pathway; O-succinyl-L-homoserine from L-homoserine: step 1/1. Transfers a succinyl group from succinyl-CoA to L-homoserine, forming succinyl-L-homoserine. This chain is Homoserine O-succinyltransferase, found in Cardiobacterium hominis (strain ATCC 15826 / DSM 8339 / NCTC 10426 / 6573).